A 232-amino-acid chain; its full sequence is Ureidoacrylate amidohydrolase RutB (232 aa).

D26 (proton acceptor) is an active-site residue. K135 is a catalytic residue. C168 (nucleophile) is an active-site residue.

The protein belongs to the isochorismatase family. RutB subfamily.

The enzyme catalyses (Z)-3-ureidoacrylate + H2O + H(+) = (Z)-3-aminoacrylate + NH4(+) + CO2. It catalyses the reaction (Z)-3-ureidoacrylate + H2O = (Z)-3-aminoacrylate + carbamate + H(+). It carries out the reaction (Z)-2-methylureidoacrylate + H2O + H(+) = (Z)-2-methylaminoacrylate + NH4(+) + CO2. Its function is as follows. Hydrolyzes ureidoacrylate to form aminoacrylate and carbamate. The carbamate hydrolyzes spontaneously, thereby releasing one of the nitrogen atoms of the pyrimidine ring as ammonia and one of its carbon atoms as CO2. The protein is Ureidoacrylate amidohydrolase RutB of Cronobacter sakazakii (strain ATCC BAA-894) (Enterobacter sakazakii).